A 368-amino-acid chain; its full sequence is Phospho-N-acetylmuramoyl-pentapeptide-transferase (368 aa).

A run of 10 helical transmembrane segments spans residues 34-54, 79-99, 102-122, 140-160, 176-196, 207-227, 247-267, 271-291, 296-316, and 345-365; these read GAVV…IDHL, TPTM…VLWA, LNPY…VGFY, ARIL…VRLG, LVIK…VGAG, GLAI…AYLA, LAVL…FNAP, IFMG…IAVA, IVLA…IVQV, and QIVI…LSTL.

It belongs to the glycosyltransferase 4 family. MraY subfamily. Requires Mg(2+) as cofactor.

The protein resides in the cell inner membrane. It carries out the reaction UDP-N-acetyl-alpha-D-muramoyl-L-alanyl-gamma-D-glutamyl-meso-2,6-diaminopimeloyl-D-alanyl-D-alanine + di-trans,octa-cis-undecaprenyl phosphate = di-trans,octa-cis-undecaprenyl diphospho-N-acetyl-alpha-D-muramoyl-L-alanyl-D-glutamyl-meso-2,6-diaminopimeloyl-D-alanyl-D-alanine + UMP. It participates in cell wall biogenesis; peptidoglycan biosynthesis. In terms of biological role, catalyzes the initial step of the lipid cycle reactions in the biosynthesis of the cell wall peptidoglycan: transfers peptidoglycan precursor phospho-MurNAc-pentapeptide from UDP-MurNAc-pentapeptide onto the lipid carrier undecaprenyl phosphate, yielding undecaprenyl-pyrophosphoryl-MurNAc-pentapeptide, known as lipid I. The sequence is that of Phospho-N-acetylmuramoyl-pentapeptide-transferase from Bradyrhizobium sp. (strain BTAi1 / ATCC BAA-1182).